Here is a 332-residue protein sequence, read N- to C-terminus: tRNA dimethylallyltransferase (332 aa).

An ATP-binding site is contributed by 17-24; it reads GPTCSGKS. 19 to 24 is a binding site for substrate; the sequence is TCSGKS. 2 interaction with substrate tRNA regions span residues 42–45 and 166–170; these read DSMQ and QRVAR.

This sequence belongs to the IPP transferase family. In terms of assembly, monomer. Mg(2+) is required as a cofactor.

The enzyme catalyses adenosine(37) in tRNA + dimethylallyl diphosphate = N(6)-dimethylallyladenosine(37) in tRNA + diphosphate. Catalyzes the transfer of a dimethylallyl group onto the adenine at position 37 in tRNAs that read codons beginning with uridine, leading to the formation of N6-(dimethylallyl)adenosine (i(6)A). The protein is tRNA dimethylallyltransferase of Gluconacetobacter diazotrophicus (strain ATCC 49037 / DSM 5601 / CCUG 37298 / CIP 103539 / LMG 7603 / PAl5).